Reading from the N-terminus, the 840-residue chain is SLIT and NTRK-like protein 6 (840 aa).

Residues 1–18 (MKLWTYLLYPSLLACLSL) form the signal peptide. The LRRNT 1 domain maps to 22 to 67 (SPMPSVRGSCDTLCNCEEKDGIMIINCEEKGINKLSQISVPPSRPF). Residues 23–609 (PMPSVRGSCD…LTDAVPLSVL (587 aa)) lie on the Extracellular side of the membrane. LRR repeat units lie at residues 89–110 (NALS…AFNG), 113–134 (LLKQ…TFHG), 137–158 (NLEF…AFSK), 161–182 (RLKV…IFRF), and 184–205 (PLTH…GFLE). The LRRCT 1 domain occupies 218–269 (NKWACNCELLQLKNWLENMPPQSIIGDVICYSPPPFKGSVLSRLKKESFCPT). The region spanning 319-360 (PSTQLPVPYCPIPCNCKVLSPSGLLIHCQERNIESLSDLQPP) is the LRRNT 2 domain. 6 LRR repeats span residues 363–384 (NPRK…DLTD), 387–408 (TLEM…SFMN), 411–432 (RLQK…MFLG), 435–456 (SLEY…TFNP), 459–480 (KLKV…IFLG), and 482–503 (PLTR…NILD). The region spanning 516–567 (NPWDCSCDLVGLQQWIHKLGKGTMTDDILCTSPGHLDKKELKALNSDLLCPG) is the LRRCT 2 domain. The helical transmembrane segment at 610–630 (ILGLLIVFITIVFCAAGIVVF) threads the bilayer. Residues 631 to 840 (VLHRRRRYKK…DYLEVLEQQT (210 aa)) are Cytoplasmic-facing. Positions 717–726 (QRSLLERENH) are enriched in basic and acidic residues. The segment at 717–736 (QRSLLERENHSPLTGSNMKY) is disordered. Residues 727–736 (SPLTGSNMKY) are compositionally biased toward polar residues.

The protein belongs to the SLITRK family. In terms of tissue distribution, in the embryo, expressed in otic cyst, lateral trunk epidermis and underlying mesodermal tissue, limb bud, maxillary process, cochlea, retina, tongue, tooth primordium, central nervous system, and primordia of visceral organs including lung, gastrointestinal tract and pancreas. In the central nervous system, expressed primarily in dorsal thalamus, cerebellum and medulla.

The protein resides in the cell membrane. In terms of biological role, regulator of neurite outgrowth required for normal hearing and vision. The chain is SLIT and NTRK-like protein 6 (Slitrk6) from Mus musculus (Mouse).